The following is a 148-amino-acid chain: Augurin (148 aa).

A signal peptide spans 1–31 (MSTSSARPAVLALAGLALLLLLCLGPDGISG). Propeptides lie at residues 32-70 (NKLKKMLQKREGPVPSKTNVAVAENTAKEFLGGLKRAKR) and 133-148 (SRESFRHGASVNYNDY).

Belongs to the augurin family. In terms of tissue distribution, expressed in the intermediate lobe of pituitary, glomerular layer of adrenal cortex, choroid plexus and atrioventricular node of the heart. Expressed in the brain with high expression in the choroid plexus and the epithelial lining of the central canal and expression in the gray matter of the spinal cord (at protein level).

It is found in the secreted. The protein resides in the cytoplasm. It localises to the apical cell membrane. Probable hormone that may attenuate cell proliferation and induce senescence of oligodendrocyte and neural precursor cells in the central nervous system. ECRG4-induced senescence is characterized by G1 arrest, RB1 dephosphorylation and accelerated CCND1 and CCND3 proteasomal degradation. The sequence is that of Augurin from Mus musculus (Mouse).